A 343-amino-acid polypeptide reads, in one-letter code: Lipopolysaccharide core biosynthesis glycosyltransferase LpsD (343 aa).

The protein belongs to the glycosyltransferase group 1 family. Glycosyltransferase 4 subfamily.

The protein operates within bacterial outer membrane biogenesis; LPS core biosynthesis. This is Lipopolysaccharide core biosynthesis glycosyltransferase LpsD (lpsD) from Rhizobium meliloti (strain 1021) (Ensifer meliloti).